Consider the following 166-residue polypeptide: Protein-export protein SecB (166 aa).

The protein belongs to the SecB family. Homotetramer, a dimer of dimers. One homotetramer interacts with 1 SecA dimer.

Its subcellular location is the cytoplasm. One of the proteins required for the normal export of preproteins out of the cell cytoplasm. It is a molecular chaperone that binds to a subset of precursor proteins, maintaining them in a translocation-competent state. It also specifically binds to its receptor SecA. The protein is Protein-export protein SecB of Acidiphilium cryptum (strain JF-5).